Reading from the N-terminus, the 279-residue chain is NH(3)-dependent NAD(+) synthetase (279 aa).

Residue 46-53 (GISGGQDS) coordinates ATP. A Mg(2+)-binding site is contributed by D52. R145 lines the deamido-NAD(+) pocket. T165 serves as a coordination point for ATP. E170 contributes to the Mg(2+) binding site. Deamido-NAD(+)-binding residues include K178 and D185. Residues K194 and T216 each contribute to the ATP site. 265–266 (HK) contacts deamido-NAD(+).

The protein belongs to the NAD synthetase family. As to quaternary structure, homodimer.

It carries out the reaction deamido-NAD(+) + NH4(+) + ATP = AMP + diphosphate + NAD(+) + H(+). It participates in cofactor biosynthesis; NAD(+) biosynthesis; NAD(+) from deamido-NAD(+) (ammonia route): step 1/1. Functionally, catalyzes the ATP-dependent amidation of deamido-NAD to form NAD. Uses ammonia as a nitrogen source. In Rhodococcus jostii (strain RHA1), this protein is NH(3)-dependent NAD(+) synthetase.